The sequence spans 254 residues: MPQQIELRNIALQAAQPLVHGVSLTLQRGRVLALVGGSGSGKSLTCAATLGILPAGVRQTAGEILADGKPVSPCALRGIKIATIMQNPRSAFNPLHTMHTHARETCLALGKPADDATLTAAIEAVGLENAARVLKLYPFEMSGGMLQRMMIAMAVLCESPFIIADEPTTDLDVVAQARILDLLESIMQKQAPGMLLVTHDMGVVARLADDVAVMSDGKIVEQGDVETLFNAPKHTVTRSLVSAHLALYGMELAS.

The ABC transporter domain maps to 2-241 (PQQIELRNIA…PKHTVTRSLV (240 aa)). Residue 36 to 43 (GGSGSGKS) coordinates ATP.

It belongs to the ABC transporter superfamily. Nickel importer (TC 3.A.1.5.3) family. As to quaternary structure, the complex is composed of two ATP-binding proteins (NikD and NikE), two transmembrane proteins (NikB and NikC) and a solute-binding protein (NikA).

It localises to the cell inner membrane. It carries out the reaction Ni(2+)(out) + ATP + H2O = Ni(2+)(in) + ADP + phosphate + H(+). In terms of biological role, part of the ABC transporter complex NikABCDE involved in nickel import. Responsible for energy coupling to the transport system. This chain is Nickel import ATP-binding protein NikD, found in Escherichia coli (strain K12).